A 395-amino-acid polypeptide reads, in one-letter code: Argininosuccinate synthase (395 aa).

Residues 9–17 (AYSGGLDTS) and Ala37 each bind ATP. L-citrulline contacts are provided by Tyr87 and Ser92. Gly117 is an ATP binding site. 3 residues coordinate L-aspartate: Thr119, Asn123, and Asp124. L-citrulline is bound at residue Asn123. L-citrulline-binding residues include Arg127, Ser173, Ser182, Glu258, and Tyr270.

The protein belongs to the argininosuccinate synthase family. Type 1 subfamily. Homotetramer.

It is found in the cytoplasm. It carries out the reaction L-citrulline + L-aspartate + ATP = 2-(N(omega)-L-arginino)succinate + AMP + diphosphate + H(+). Its pathway is amino-acid biosynthesis; L-arginine biosynthesis; L-arginine from L-ornithine and carbamoyl phosphate: step 2/3. The protein is Argininosuccinate synthase of Methanospirillum hungatei JF-1 (strain ATCC 27890 / DSM 864 / NBRC 100397 / JF-1).